The sequence spans 148 residues: Stathmin (148 aa).

The region spanning 4–145 (SDIQVKELEK…NKEGKDPGEA (142 aa)) is the SLD domain. A Phosphoserine; by PKA modification is found at Ser-16. Ser-38 carries the post-translational modification Phosphoserine; by CDK1. The stretch at 41–140 (KKKDLSLEEI…EEVRKNKEGK (100 aa)) forms a coiled coil. Ser-63 carries the phosphoserine; by PKA modification. The interval 122–148 (RLREKDKHIEEVRKNKEGKDPGEAETN) is disordered.

Belongs to the stathmin family. Binds to two alpha/beta-tubulin heterodimers. Post-translationally, many different phosphorylated forms are observed depending on specific combinations among the sites which can be phosphorylated. MAPK is responsible for the phosphorylation of stathmin in response to NGF.

It is found in the cytoplasm. Its subcellular location is the cytoskeleton. Involved in the regulation of the microtubule (MT) filament system by destabilizing microtubules. It prevents assembly and promotes disassembly of microtubules. The chain is Stathmin (STMN1) from Gallus gallus (Chicken).